The primary structure comprises 161 residues: Nuclear transcription factor Y subunit B-3 (161 aa).

The tract at residues 1–23 (MADSDNDSGGHKDGGNASTREQD) is disordered. Ala-2 is subject to N-acetylalanine. Basic and acidic residues predominate over residues 8-23 (SGGHKDGGNASTREQD). A DNA-binding region spans residues 26 to 32 (LPIANVS). A subunit association domain (SAD) region spans residues 53 to 64 (VQECVSEFISFI). Residues 114–146 (EKTTTAGRQGDKEGGGGGGGAGSGSGGAPMYGG) form a disordered region. The segment covering 128 to 146 (GGGGGGAGSGSGGAPMYGG) has biased composition (gly residues).

It belongs to the NFYB/HAP3 subunit family. In terms of assembly, heterotrimeric transcription factor composed of three components, NF-YA, NF-YB and NF-YC. NF-YB and NF-YC must interact and dimerize for NF-YA association and DNA binding. Component of a heat stress-inducible transcriptional complex with NF-YA and NF-YB subunits made, at least, of NFYA2, NFYB3 and DPB3-1 in cooperation with DREB2A. Binds directly with DPB3-1. Ubiquitous. Expressed in seedlings, petioles, hypocotyls, reproductive organ tissues and leaves.

It localises to the nucleus. The protein localises to the cytoplasm. The protein resides in the cytosol. Component of the NF-Y/HAP transcription factor complex. The NF-Y complex stimulates the transcription of various genes by recognizing and binding to a CCAAT motif in promoters. Promotes the expression of heat stress-inducible genes by contributing to the formation of a heat stress-specific transcriptional complex with NF-Y subunits (e.g. DPB3-1, NF-YA2 and NF-YB3) and DREB2A at the promoter of target genes, thus promoting heat tolerance. The sequence is that of Nuclear transcription factor Y subunit B-3 from Arabidopsis thaliana (Mouse-ear cress).